Consider the following 95-residue polypeptide: Acylphosphatase (95 aa).

The region spanning 10-95 (CIHATVSGKV…VEDYSDFRVR (86 aa)) is the Acylphosphatase-like domain. Active-site residues include arginine 25 and asparagine 43.

The protein belongs to the acylphosphatase family.

The catalysed reaction is an acyl phosphate + H2O = a carboxylate + phosphate + H(+). The chain is Acylphosphatase (acyP) from Coxiella burnetii (strain Dugway 5J108-111).